A 149-amino-acid polypeptide reads, in one-letter code: Transcriptional repressor NrdR (149 aa).

Residues 3 to 34 (CPFCGHAATQVIDTRMSEEGDTVRRRRRCESC) fold into a zinc finger. The 91-residue stretch at 49–139 (PAVVKKNGSR…VYRSFEDVSE (91 aa)) folds into the ATP-cone domain.

Belongs to the NrdR family. Requires Zn(2+) as cofactor.

Its function is as follows. Negatively regulates transcription of bacterial ribonucleotide reductase nrd genes and operons by binding to NrdR-boxes. This Ralstonia nicotianae (strain ATCC BAA-1114 / GMI1000) (Ralstonia solanacearum) protein is Transcriptional repressor NrdR.